The primary structure comprises 525 residues: Averantin hydroxylase (525 aa).

Residues 36–56 (VLATFVAGIGALLLWTLTTVF) form a helical membrane-spanning segment. Residue Asn-315 is glycosylated (N-linked (GlcNAc...) asparagine). Cys-462 contacts heme.

This sequence belongs to the cytochrome P450 family. Heme is required as a cofactor.

It localises to the membrane. It carries out the reaction (1'S)-averantin + reduced [NADPH--hemoprotein reductase] + O2 = (1'S,5'R)-5'-hydroxyaverantin + oxidized [NADPH--hemoprotein reductase] + H2O. The catalysed reaction is (1'S)-averantin + reduced [NADPH--hemoprotein reductase] + O2 = (1'S,5'S)-5'-hydroxyaverantin + oxidized [NADPH--hemoprotein reductase] + H2O + H(+). It participates in mycotoxin biosynthesis. Its function is as follows. Averantin hydroxylase; part of the fragmented gene cluster that mediates the biosynthesis of dothistromin (DOTH), a polyketide toxin very similar in structure to the aflatoxin precursor, versicolorin B. The first step of the pathway is the conversion of acetate to norsolorinic acid (NOR) and requires the fatty acid synthase subunits hexA and hexB, as well as the polyketide synthase pksA. PksA combines a hexanoyl starter unit and 7 malonyl-CoA extender units to synthesize the precursor NOR. The hexanoyl starter unit is provided to the acyl-carrier protein (ACP) domain by the fungal fatty acid synthase hexA/hexB. The second step is the conversion of NOR to averantin (AVN) and requires the norsolorinic acid ketoreductase nor1, which catalyzes the dehydration of norsolorinic acid to form (1'S)-averantin. The cytochrome P450 monooxygenase avnA then catalyzes the hydroxylation of AVN to 5'hydroxyaverantin (HAVN). The next step is performed by adhA that transforms HAVN to averufin (AVF). Averufin might then be converted to hydroxyversicolorone by cypX and avfA. Hydroxyversicolorone is further converted versiconal hemiacetal acetate (VHA) by moxY. VHA is then the substrate for the versiconal hemiacetal acetate esterase est1 to yield versiconal (VAL). Versicolorin B synthase vbsA then converts VAL to versicolorin B (VERB) by closing the bisfuran ring. Then, the activity of the versicolorin B desaturase verB leads to versicolorin A (VERA). DotB, a predicted chloroperoxidase, may perform epoxidation of the A-ring of VERA. Alternatively, a cytochrome P450, such as cypX or avnA could catalyze this step. It is also possible that another, uncharacterized, cytochrome P450 enzyme is responsible for this step. Opening of the epoxide could potentially be achieved by the epoxide hydrolase epoA. However, epoA seems not to be required for DOTH biosynthesis, but other epoxide hydrolases may have the ability to complement this hydrolysis. Alternatively, opening of the epoxide ring could be achieved non-enzymatically. The next step is the deoxygenation of ring A to yield the 5,8-dihydroxyanthraquinone which is most likely catalyzed by the NADPH dehydrogenase encoded by ver1. The last stages of DOTH biosynthesis are proposed to involve hydroxylation of the bisfuran. OrdB and norB might have oxidative roles here. An alternative possibility is that cytochrome P450 monoogenases such as avnA and cypX might perform these steps in addition to previously proposed steps. The polypeptide is Averantin hydroxylase (Dothistroma septosporum (strain NZE10 / CBS 128990) (Red band needle blight fungus)).